Reading from the N-terminus, the 191-residue chain is Calcium-activated potassium channel subunit beta-1 (191 aa).

At 1–18 (MGKKLVMAQKRGETRALC) the chain is on the cytoplasmic side. The helical transmembrane segment at 19 to 39 (LGVAMVVCAAITYYILGTTVL) threads the bilayer. Over 40–155 (PLYQKSVWTQ…VVYQRLYGPQ (116 aa)) the chain is Extracellular. Residues Asn-80 and Asn-142 are each glycosylated (N-linked (GlcNAc...) asparagine). Residues 156–176 (ILLFSFFWPTFLLTGGLLIIA) traverse the membrane as a helical segment. Over 177–191 (MVKLNRSLSVLAAQK) the chain is Cytoplasmic.

Belongs to the KCNMB (TC 8.A.14.1) family. KCNMB1 subfamily. In terms of assembly, interacts with KCNMA1 tetramer. There are probably 4 molecules of KCMNB1 per KCNMA1 tetramer. N-glycosylated. As to expression, weakly expressed. In brain, it is expressed in a few discrete populations of neurons that also express KCNMA1.

It is found in the membrane. In terms of biological role, regulatory subunit of the calcium activated potassium KCNMA1 (maxiK) channel. Modulates the calcium sensitivity and gating kinetics of KCNMA1, thereby contributing to KCNMA1 channel diversity. Increases the apparent Ca(2+)/voltage sensitivity of the KCNMA1 channel. It also modifies KCNMA1 channel kinetics and alters its pharmacological properties. It slows down the activation and the deactivation kinetics of the channel. Acts as a negative regulator of smooth muscle contraction by enhancing the calcium sensitivity to KCNMA1. Its presence is also a requirement for internal binding of the KCNMA1 channel opener dehydrosoyasaponin I (DHS-1) triterpene glycoside and for external binding of the agonist hormone 17-beta-estradiol (E2). Increases the binding activity of charybdotoxin (CTX) toxin to KCNMA1 peptide blocker by increasing the CTX association rate and decreasing the dissociation rate. The polypeptide is Calcium-activated potassium channel subunit beta-1 (Kcnmb1) (Rattus norvegicus (Rat)).